A 412-amino-acid polypeptide reads, in one-letter code: DnaJ homolog subfamily A member 2 (412 aa).

Residues 8-70 (KLYDILGVPP…EKRELYDRYG (63 aa)) form the J domain. An N6-acetyllysine modification is found at lysine 39. Residues serine 78 and serine 123 each carry the phosphoserine modification. A CR-type zinc finger spans residues 130–214 (GKTTKLQLSK…CEGKKVIKEV (85 aa)). Lysine 134 participates in a covalent cross-link: Glycyl lysine isopeptide (Lys-Gly) (interchain with G-Cter in SUMO2). Residues cysteine 143 and cysteine 146 each coordinate Zn(2+). Residues 143–150 (CSACSGQG) form a CXXCXGXG motif repeat. At lysine 152 the chain carries N6-acetyllysine. Zn(2+) contacts are provided by cysteine 159, cysteine 162, cysteine 186, cysteine 189, cysteine 202, and cysteine 205. 3 CXXCXGXG motif repeats span residues 159–166 (CSACRGRG), 186–193 (CSDCNGEG), and 202–209 (CKKCEGKK). Residues 359–412 (PEVPNIIGDTEEVELQEFDSTRGSGGGQRREAYNDSSDEESSSHHGPGVQCAHQ) are disordered. The residue at position 391 (tyrosine 391) is a Phosphotyrosine. Phosphoserine is present on residues serine 394 and serine 395. Residue cysteine 409 is modified to Cysteine methyl ester. Cysteine 409 is lipidated: S-farnesyl cysteine. Positions 410 to 412 (AHQ) are cleaved as a propeptide — removed in mature form.

It is found in the membrane. Its function is as follows. Co-chaperone of Hsc70. Stimulates ATP hydrolysis and the folding of unfolded proteins mediated by HSPA1A/B (in vitro). This Bos taurus (Bovine) protein is DnaJ homolog subfamily A member 2 (DNAJA2).